The chain runs to 147 residues: 3-dehydroquinate dehydratase (147 aa).

Residue Tyr23 is the Proton acceptor of the active site. Substrate contacts are provided by Asn75, His81, and Asp88. The Proton donor role is filled by His101. Residues 102-103 (LS) and Arg112 each bind substrate.

Belongs to the type-II 3-dehydroquinase family. As to quaternary structure, homododecamer.

It catalyses the reaction 3-dehydroquinate = 3-dehydroshikimate + H2O. Its pathway is metabolic intermediate biosynthesis; chorismate biosynthesis; chorismate from D-erythrose 4-phosphate and phosphoenolpyruvate: step 3/7. Functionally, catalyzes a trans-dehydration via an enolate intermediate. The sequence is that of 3-dehydroquinate dehydratase from Stutzerimonas stutzeri (strain A1501) (Pseudomonas stutzeri).